An 879-amino-acid chain; its full sequence is Leucine--tRNA ligase (879 aa).

A 'HIGH' region motif is present at residues 43 to 53; the sequence is PYPSGRIHMGH. The 'KMSKS' region motif lies at 636-640; that stretch reads KMSKS. Lys-639 contacts ATP.

The protein belongs to the class-I aminoacyl-tRNA synthetase family.

It is found in the cytoplasm. The enzyme catalyses tRNA(Leu) + L-leucine + ATP = L-leucyl-tRNA(Leu) + AMP + diphosphate. The protein is Leucine--tRNA ligase of Afipia carboxidovorans (strain ATCC 49405 / DSM 1227 / KCTC 32145 / OM5) (Oligotropha carboxidovorans).